The chain runs to 327 residues: GMP reductase (327 aa).

The Thioimidate intermediate role is filled by Cys176. Residue 205–228 (IIADGGIRTHGDIAKSIRFGATMV) participates in NADP(+) binding.

It belongs to the IMPDH/GMPR family. GuaC type 2 subfamily.

It carries out the reaction IMP + NH4(+) + NADP(+) = GMP + NADPH + 2 H(+). Catalyzes the irreversible NADPH-dependent deamination of GMP to IMP. It functions in the conversion of nucleobase, nucleoside and nucleotide derivatives of G to A nucleotides, and in maintaining the intracellular balance of A and G nucleotides. In Streptococcus equi subsp. equi (strain 4047), this protein is GMP reductase.